The sequence spans 380 residues: Queuine tRNA-ribosyltransferase (380 aa).

Aspartate 96 functions as the Proton acceptor in the catalytic mechanism. Substrate-binding positions include 96 to 100 (DSGGF), aspartate 150, glutamine 193, and glycine 220. The interval 251 to 257 (GVGAPDS) is RNA binding. Aspartate 270 (nucleophile) is an active-site residue. The RNA binding; important for wobble base 34 recognition stretch occupies residues 275–279 (TRIAR). Residues cysteine 308, cysteine 310, cysteine 313, and histidine 339 each coordinate Zn(2+).

This sequence belongs to the queuine tRNA-ribosyltransferase family. In terms of assembly, homodimer. Within each dimer, one monomer is responsible for RNA recognition and catalysis, while the other monomer binds to the replacement base PreQ1. The cofactor is Zn(2+).

It catalyses the reaction 7-aminomethyl-7-carbaguanine + guanosine(34) in tRNA = 7-aminomethyl-7-carbaguanosine(34) in tRNA + guanine. It participates in tRNA modification; tRNA-queuosine biosynthesis. Functionally, catalyzes the base-exchange of a guanine (G) residue with the queuine precursor 7-aminomethyl-7-deazaguanine (PreQ1) at position 34 (anticodon wobble position) in tRNAs with GU(N) anticodons (tRNA-Asp, -Asn, -His and -Tyr). Catalysis occurs through a double-displacement mechanism. The nucleophile active site attacks the C1' of nucleotide 34 to detach the guanine base from the RNA, forming a covalent enzyme-RNA intermediate. The proton acceptor active site deprotonates the incoming PreQ1, allowing a nucleophilic attack on the C1' of the ribose to form the product. After dissociation, two additional enzymatic reactions on the tRNA convert PreQ1 to queuine (Q), resulting in the hypermodified nucleoside queuosine (7-(((4,5-cis-dihydroxy-2-cyclopenten-1-yl)amino)methyl)-7-deazaguanosine). This chain is Queuine tRNA-ribosyltransferase, found in Streptococcus uberis (strain ATCC BAA-854 / 0140J).